The chain runs to 592 residues: Bifunctional enzyme BirA/CoaX (592 aa).

A biotin--protein ligase region spans residues 1–329; sequence MTVLKPSHWR…ISLRPDNRSV (329 aa). Residues 83 to 259 enclose the BPL/LPL catalytic domain; it reads QTALKHECAS…ELGAVLEQYA (177 aa). The type III pantothenate kinase stretch occupies residues 336–592; it reads DSERFLLLEG…AAEGGESEHA (257 aa). Position 344 to 351 (344 to 351) interacts with ATP; that stretch reads EGGNSRLK. Residues Y426 and 433-436 contribute to the substrate site; that span reads GSDR. D435 functions as the Proton acceptor in the catalytic mechanism. ATP is bound at residue T458. Position 508 (T508) interacts with substrate.

In the N-terminal section; belongs to the biotin--protein ligase family. The protein in the C-terminal section; belongs to the type III pantothenate kinase family. The cofactor is NH4(+). K(+) is required as a cofactor.

It is found in the cytoplasm. The catalysed reaction is biotin + L-lysyl-[protein] + ATP = N(6)-biotinyl-L-lysyl-[protein] + AMP + diphosphate + H(+). It catalyses the reaction (R)-pantothenate + ATP = (R)-4'-phosphopantothenate + ADP + H(+). Its pathway is cofactor biosynthesis; coenzyme A biosynthesis; CoA from (R)-pantothenate: step 1/5. Activates biotin to form biotinyl-5'-adenylate and transfers the biotin moiety to biotin-accepting proteins. Its function is as follows. Catalyzes the phosphorylation of pantothenate (Pan), the first step in CoA biosynthesis. In Neisseria gonorrhoeae (strain ATCC 700825 / FA 1090), this protein is Bifunctional enzyme BirA/CoaX (birA/coaX).